A 509-amino-acid polypeptide reads, in one-letter code: Maturase K (509 aa).

This sequence belongs to the intron maturase 2 family. MatK subfamily.

The protein resides in the plastid. Its subcellular location is the chloroplast. Usually encoded in the trnK tRNA gene intron. Probably assists in splicing its own and other chloroplast group II introns. This is Maturase K from Portulaca oleracea (Common purslane).